Here is a 94-residue protein sequence, read N- to C-terminus: ATP synthase subunit c (94 aa).

The next 2 helical transmembrane spans lie at 15 to 35 and 61 to 81; these read VSVG…WGLI and GGLM…FIFA.

Belongs to the ATPase C chain family. F-type ATPases have 2 components, F(1) - the catalytic core - and F(0) - the membrane proton channel. F(1) has five subunits: alpha(3), beta(3), gamma(1), delta(1), epsilon(1). F(0) has three main subunits: a(1), b(2) and c(10-14). The alpha and beta chains form an alternating ring which encloses part of the gamma chain. F(1) is attached to F(0) by a central stalk formed by the gamma and epsilon chains, while a peripheral stalk is formed by the delta and b chains.

The protein localises to the cell inner membrane. Its function is as follows. F(1)F(0) ATP synthase produces ATP from ADP in the presence of a proton or sodium gradient. F-type ATPases consist of two structural domains, F(1) containing the extramembraneous catalytic core and F(0) containing the membrane proton channel, linked together by a central stalk and a peripheral stalk. During catalysis, ATP synthesis in the catalytic domain of F(1) is coupled via a rotary mechanism of the central stalk subunits to proton translocation. Functionally, key component of the F(0) channel; it plays a direct role in translocation across the membrane. A homomeric c-ring of between 10-14 subunits forms the central stalk rotor element with the F(1) delta and epsilon subunits. The polypeptide is ATP synthase subunit c (Nitrosococcus oceani (strain ATCC 19707 / BCRC 17464 / JCM 30415 / NCIMB 11848 / C-107)).